Consider the following 346-residue polypeptide: Anthranilate phosphoribosyltransferase (346 aa).

5-phospho-alpha-D-ribose 1-diphosphate contacts are provided by residues Gly-81, 84-85 (GD), 91-94 (NVST), 109-117 (KHGNRSVSS), and Ser-121. Gly-81 serves as a coordination point for anthranilate. Ser-93 is a Mg(2+) binding site. Asn-112 contributes to the anthranilate binding site. Arg-167 is an anthranilate binding site. 2 residues coordinate Mg(2+): Asp-226 and Glu-227.

This sequence belongs to the anthranilate phosphoribosyltransferase family. In terms of assembly, homodimer. The cofactor is Mg(2+).

It catalyses the reaction N-(5-phospho-beta-D-ribosyl)anthranilate + diphosphate = 5-phospho-alpha-D-ribose 1-diphosphate + anthranilate. Its pathway is amino-acid biosynthesis; L-tryptophan biosynthesis; L-tryptophan from chorismate: step 2/5. Its function is as follows. Catalyzes the transfer of the phosphoribosyl group of 5-phosphorylribose-1-pyrophosphate (PRPP) to anthranilate to yield N-(5'-phosphoribosyl)-anthranilate (PRA). This is Anthranilate phosphoribosyltransferase from Hahella chejuensis (strain KCTC 2396).